The chain runs to 115 residues: Large ribosomal subunit protein bL19 (115 aa).

Belongs to the bacterial ribosomal protein bL19 family.

Functionally, this protein is located at the 30S-50S ribosomal subunit interface and may play a role in the structure and function of the aminoacyl-tRNA binding site. The sequence is that of Large ribosomal subunit protein bL19 from Buchnera aphidicola subsp. Schizaphis graminum (strain Sg).